The sequence spans 310 residues: Olfactory receptor 2A14 (310 aa).

Residues 1-24 (MEGNKTWITDITLPRFQVGPALEI) are Extracellular-facing. N-linked (GlcNAc...) asparagine glycosylation occurs at N4. A helical transmembrane segment spans residues 25–48 (LLCGLFSAFYTLTLLGNGVIFGII). Topologically, residues 49-56 (CLDCKLHT) are cytoplasmic. The helical transmembrane segment at 57–78 (PMYFFLSHLAIVDISYASNYVP) threads the bilayer. The Extracellular segment spans residues 79–99 (KMLTNLMNQESTISFFPCIMQ). An intrachain disulfide couples C96 to C188. Residues 100–119 (TFLYLAFAHVECLILVVMSY) form a helical membrane-spanning segment. Topologically, residues 120–138 (DRYADICHPLRYNSLMSWR) are cytoplasmic. Residues 139–157 (VCTVLAVASWVFSFLLALV) traverse the membrane as a helical segment. The Extracellular segment spans residues 158 to 194 (PLVLILSLPFCGPHEINHFFCEILSVLKLACADTWLN). The helical transmembrane segment at 195-218 (QVVIFAACVFILVGPLCLVLVSYL) threads the bilayer. At 219–235 (RILAAILRIQSGEGRRK) the chain is on the cytoplasmic side. The chain crosses the membrane as a helical span at residues 236–258 (AFSTCSSHLCVVGLFFGSAIVTY). The Extracellular segment spans residues 259 to 271 (MAPKSRHPEEQQK). A helical membrane pass occupies residues 272–291 (VLSLFYSLFNPMLNPLIYSL). The Cytoplasmic segment spans residues 292–310 (RNAEVKGALRRALRKERLT).

It belongs to the G-protein coupled receptor 1 family.

It localises to the cell membrane. Functionally, odorant receptor. The polypeptide is Olfactory receptor 2A14 (OR2A14) (Homo sapiens (Human)).